The following is a 202-amino-acid chain: ATP-dependent Clp protease proteolytic subunit (202 aa).

Catalysis depends on serine 106, which acts as the Nucleophile. Residue histidine 131 is part of the active site.

The protein belongs to the peptidase S14 family. In terms of assembly, fourteen ClpP subunits assemble into 2 heptameric rings which stack back to back to give a disk-like structure with a central cavity, resembling the structure of eukaryotic proteasomes.

Its subcellular location is the cytoplasm. It carries out the reaction Hydrolysis of proteins to small peptides in the presence of ATP and magnesium. alpha-casein is the usual test substrate. In the absence of ATP, only oligopeptides shorter than five residues are hydrolyzed (such as succinyl-Leu-Tyr-|-NHMec, and Leu-Tyr-Leu-|-Tyr-Trp, in which cleavage of the -Tyr-|-Leu- and -Tyr-|-Trp bonds also occurs).. In terms of biological role, cleaves peptides in various proteins in a process that requires ATP hydrolysis. Has a chymotrypsin-like activity. Plays a major role in the degradation of misfolded proteins. The polypeptide is ATP-dependent Clp protease proteolytic subunit (Methylibium petroleiphilum (strain ATCC BAA-1232 / LMG 22953 / PM1)).